A 276-amino-acid chain; its full sequence is Glucosamine-6-phosphate deaminase 2 (276 aa).

D72 (proton acceptor; for enolization step) is an active-site residue. A coiled-coil region spans residues 105-130; that stretch reads HILDGNAADLQAECDAFENKIKEAGG. The active-site For ring-opening step is the D141. The Proton acceptor; for ring-opening step role is filled by H143. E148 functions as the For ring-opening step in the catalytic mechanism. At T161 the chain carries Phosphothreonine.

It belongs to the glucosamine/galactosamine-6-phosphate isomerase family. In terms of assembly, homohexamer. In terms of tissue distribution, ubiquitous, with highest expression detected in testis, ovary, placenta, and heart.

Its subcellular location is the cytoplasm. It carries out the reaction alpha-D-glucosamine 6-phosphate + H2O = beta-D-fructose 6-phosphate + NH4(+). Its pathway is nucleotide-sugar biosynthesis; UDP-N-acetyl-alpha-D-glucosamine biosynthesis; alpha-D-glucosamine 6-phosphate from D-fructose 6-phosphate: step 1/1. With respect to regulation, allosterically activated by N-acetylglucosamine-6-phosphate (GlcNAc6P). Its function is as follows. Catalyzes the reversible conversion of alpha-D-glucosamine 6-phosphate (GlcN-6P) into beta-D-fructose 6-phosphate (Fru-6P) and ammonium ion, a regulatory reaction step in de novo uridine diphosphate-N-acetyl-alpha-D-glucosamine (UDP-GlcNAc) biosynthesis via hexosamine pathway. Deamination is coupled to aldo-keto isomerization mediating the metabolic flux from UDP-GlcNAc toward Fru-6P. At high ammonium level can drive amination and isomerization of Fru-6P toward hexosamines and UDP-GlcNAc synthesis. Has a role in fine tuning the metabolic fluctuations of cytosolic UDP-GlcNAc and their effects on hyaluronan synthesis that occur during tissue remodeling. This Homo sapiens (Human) protein is Glucosamine-6-phosphate deaminase 2.